Reading from the N-terminus, the 288-residue chain is Elongation factor Ts (288 aa).

The tract at residues 82–85 (TDFV) is involved in Mg(2+) ion dislocation from EF-Tu.

It belongs to the EF-Ts family.

It is found in the cytoplasm. Its function is as follows. Associates with the EF-Tu.GDP complex and induces the exchange of GDP to GTP. It remains bound to the aminoacyl-tRNA.EF-Tu.GTP complex up to the GTP hydrolysis stage on the ribosome. In Chlorobium limicola (strain DSM 245 / NBRC 103803 / 6330), this protein is Elongation factor Ts.